We begin with the raw amino-acid sequence, 480 residues long: Aspartyl/glutamyl-tRNA(Asn/Gln) amidotransferase subunit B (480 aa).

This sequence belongs to the GatB/GatE family. GatB subfamily. As to quaternary structure, heterotrimer of A, B and C subunits.

The catalysed reaction is L-glutamyl-tRNA(Gln) + L-glutamine + ATP + H2O = L-glutaminyl-tRNA(Gln) + L-glutamate + ADP + phosphate + H(+). It catalyses the reaction L-aspartyl-tRNA(Asn) + L-glutamine + ATP + H2O = L-asparaginyl-tRNA(Asn) + L-glutamate + ADP + phosphate + 2 H(+). Allows the formation of correctly charged Asn-tRNA(Asn) or Gln-tRNA(Gln) through the transamidation of misacylated Asp-tRNA(Asn) or Glu-tRNA(Gln) in organisms which lack either or both of asparaginyl-tRNA or glutaminyl-tRNA synthetases. The reaction takes place in the presence of glutamine and ATP through an activated phospho-Asp-tRNA(Asn) or phospho-Glu-tRNA(Gln). This is Aspartyl/glutamyl-tRNA(Asn/Gln) amidotransferase subunit B from Streptococcus pneumoniae serotype 2 (strain D39 / NCTC 7466).